Consider the following 432-residue polypeptide: 3-phosphoshikimate 1-carboxyvinyltransferase (432 aa).

Positions 22, 23, and 27 each coordinate 3-phosphoshikimate. Lys22 is a binding site for phosphoenolpyruvate. Phosphoenolpyruvate is bound by residues Gly96 and Arg127. Residues Ser173, Ser174, Gln175, Ser201, Asp317, Asn340, and Lys344 each coordinate 3-phosphoshikimate. A phosphoenolpyruvate-binding site is contributed by Gln175. The active-site Proton acceptor is the Asp317. Arg348, Arg392, and Lys417 together coordinate phosphoenolpyruvate.

The protein belongs to the EPSP synthase family. As to quaternary structure, monomer.

It is found in the cytoplasm. It catalyses the reaction 3-phosphoshikimate + phosphoenolpyruvate = 5-O-(1-carboxyvinyl)-3-phosphoshikimate + phosphate. It participates in metabolic intermediate biosynthesis; chorismate biosynthesis; chorismate from D-erythrose 4-phosphate and phosphoenolpyruvate: step 6/7. In terms of biological role, catalyzes the transfer of the enolpyruvyl moiety of phosphoenolpyruvate (PEP) to the 5-hydroxyl of shikimate-3-phosphate (S3P) to produce enolpyruvyl shikimate-3-phosphate and inorganic phosphate. The chain is 3-phosphoshikimate 1-carboxyvinyltransferase from Mannheimia haemolytica (Pasteurella haemolytica).